The sequence spans 260 residues: Snake venom serine protease 2 (260 aa).

An N-terminal signal peptide occupies residues 1–18 (MVLIRVLANLLILQLFYA). A propeptide spanning residues 19 to 24 (QKSSEL) is cleaved from the precursor. The Peptidase S1 domain maps to 25–251 (IIGGDECNIN…HLDWIKSIIA (227 aa)). Cystine bridges form between C31/C165, C52/C68, C100/C258, C144/C212, C176/C191, and C202/C227. N-linked (GlcNAc...) asparagine glycosylation is found at N123 and N124.

The protein belongs to the peptidase S1 family. Snake venom subfamily. As to quaternary structure, monomer. Expressed by the venom gland.

The protein resides in the secreted. Snake venom serine protease that may act in the hemostasis system of the prey. This chain is Snake venom serine protease 2 (TLF2), found in Protobothrops flavoviridis (Habu).